Reading from the N-terminus, the 150-residue chain is Phosphopantetheine adenylyltransferase (150 aa).

Thr-9 lines the substrate pocket. Residues 9–10 and His-17 contribute to the ATP site; that span reads TF. Lys-41, Thr-73, and Arg-87 together coordinate substrate. ATP is bound by residues 88–90, Glu-98, and 122–128; these read GIR and LTCVSST.

It belongs to the bacterial CoaD family. Homohexamer. Mg(2+) is required as a cofactor.

The protein localises to the cytoplasm. It catalyses the reaction (R)-4'-phosphopantetheine + ATP + H(+) = 3'-dephospho-CoA + diphosphate. It participates in cofactor biosynthesis; coenzyme A biosynthesis; CoA from (R)-pantothenate: step 4/5. Functionally, reversibly transfers an adenylyl group from ATP to 4'-phosphopantetheine, yielding dephospho-CoA (dPCoA) and pyrophosphate. The sequence is that of Phosphopantetheine adenylyltransferase from Bacteroides fragilis (strain ATCC 25285 / DSM 2151 / CCUG 4856 / JCM 11019 / LMG 10263 / NCTC 9343 / Onslow / VPI 2553 / EN-2).